Consider the following 122-residue polypeptide: Small ribosomal subunit protein uS13 (122 aa).

Residues 95–122 (NLPVRGQRTHTNARTRKGKAKPIAGKKK) form a disordered region.

The protein belongs to the universal ribosomal protein uS13 family. As to quaternary structure, part of the 30S ribosomal subunit. Forms a loose heterodimer with protein S19. Forms two bridges to the 50S subunit in the 70S ribosome.

Its function is as follows. Located at the top of the head of the 30S subunit, it contacts several helices of the 16S rRNA. In the 70S ribosome it contacts the 23S rRNA (bridge B1a) and protein L5 of the 50S subunit (bridge B1b), connecting the 2 subunits; these bridges are implicated in subunit movement. Contacts the tRNAs in the A and P-sites. This chain is Small ribosomal subunit protein uS13, found in Methylobacterium sp. (strain 4-46).